The sequence spans 129 residues: MCCMASIDCLPDELLVGILSFILTNEAASTSILSKRWRTLFAFSHNLDCNDSIFCHPRKNKRKSFRYFLYKTLANLEGYSRIKKLSLKFDEKSNIREGHGKLVVNHWICNALEHGVSELHLCFEYMGWY.

Residues 4–50 (MASIDCLPDELLVGILSFILTNEAASTSILSKRWRTLFAFSHNLDCN) form the F-box domain.

This is Putative F-box protein At3g42722 from Arabidopsis thaliana (Mouse-ear cress).